A 392-amino-acid polypeptide reads, in one-letter code: p21-activated protein kinase-interacting protein 1 (392 aa).

WD repeat units follow at residues 40-77 (AHTASLSAVAVNSRFVVTGSKDETIHIYDMKKKVDHGA), 80-118 (HHNGTITCLKFHGNRHLISGAEDGLICVWDARRWECLKS), 121-160 (AHKGHVTFLSIHPSGRLALSVGTDKTLRTWNLVEGRSAFI), 202-240 (TNERRVSSVTFLSESVLTVAGDEEVVRFFDCDSLTCLSE), and 243-284 (AHEN…KVSP). Positions 309-392 (TKESPPAAAE…RKKKKIRMMQ (84 aa)) are disordered. A compositionally biased stretch (basic and acidic residues) spans 325 to 351 (EQSRRNKEESGHAVQEEEKQPKPDTEK). Over residues 355–368 (TGDSNKPTRGNSLV) the composition is skewed to polar residues. The segment covering 381-392 (KKRKKKKIRMMQ) has biased composition (basic residues).

In terms of assembly, interacts with PAK1.

Its subcellular location is the nucleus. The protein resides in the nucleolus. Its function is as follows. Negatively regulates the PAK1 kinase. PAK1 is a member of the PAK kinase family, which has been shown to play a positive role in the regulation of signaling pathways involving MAPK8 and RELA. PAK1 exists as an inactive homodimer, which is activated by binding of small GTPases such as CDC42 to an N-terminal regulatory domain. PAK1IP1 also binds to the N-terminus of PAK1, and inhibits the specific activation of PAK1 by CDC42. May be involved in ribosomal large subunit assembly. This chain is p21-activated protein kinase-interacting protein 1 (PAK1IP1), found in Bos taurus (Bovine).